The sequence spans 993 residues: UPF0182 protein MAV_4137 (993 aa).

7 consecutive transmembrane segments (helical) span residues 18-38 (ILIL…RLID), 63-83 (FVVF…GLAV), 113-133 (LVSI…AQSY), 175-195 (FVAV…FGGI), 210-230 (IQLV…YWLD), 254-274 (AVLP…AAVF), and 287-307 (IGLV…PLIV). Residues 903–941 (NIQPTEGGAPAASPPANAPAPAVTPGSAPPVAAPPVPDG) are disordered. Pro residues predominate over residues 929–939 (SAPPVAAPPVP).

This sequence belongs to the UPF0182 family.

Its subcellular location is the cell membrane. The polypeptide is UPF0182 protein MAV_4137 (Mycobacterium avium (strain 104)).